A 258-amino-acid polypeptide reads, in one-letter code: Imidazole glycerol phosphate synthase subunit HisF (258 aa).

Residues Asp11 and Asp130 contribute to the active site.

It belongs to the HisA/HisF family. In terms of assembly, heterodimer of HisH and HisF.

It localises to the cytoplasm. It carries out the reaction 5-[(5-phospho-1-deoxy-D-ribulos-1-ylimino)methylamino]-1-(5-phospho-beta-D-ribosyl)imidazole-4-carboxamide + L-glutamine = D-erythro-1-(imidazol-4-yl)glycerol 3-phosphate + 5-amino-1-(5-phospho-beta-D-ribosyl)imidazole-4-carboxamide + L-glutamate + H(+). It participates in amino-acid biosynthesis; L-histidine biosynthesis; L-histidine from 5-phospho-alpha-D-ribose 1-diphosphate: step 5/9. IGPS catalyzes the conversion of PRFAR and glutamine to IGP, AICAR and glutamate. The HisF subunit catalyzes the cyclization activity that produces IGP and AICAR from PRFAR using the ammonia provided by the HisH subunit. This Rhodospirillum centenum (strain ATCC 51521 / SW) protein is Imidazole glycerol phosphate synthase subunit HisF.